We begin with the raw amino-acid sequence, 652 residues long: Aorsin (652 aa).

A signal peptide spans 1–22 (MRPLSHLSFFNGLLLGLSALSA). Residues 23–215 (ATSVVHERRE…PRPIQQHDVK (193 aa)) constitute a propeptide, removed in mature form. Residue N112 is glycosylated (N-linked (GlcNAc...) asparagine). Residues 177 to 211 (VNLNPSSGKPSSIRRRAAASKKTKLPARGPRPIQQ) are disordered. Basic residues predominate over residues 188 to 201 (SIRRRAAASKKTKL). Residues N218 and N247 are each glycosylated (N-linked (GlcNAc...) asparagine). The Peptidase S53 domain maps to 225 to 651 (LITPECIRAL…PKMLKLWLDL (427 aa)). Active-site charge relay system residues include E301 and D305. N-linked (GlcNAc...) asparagine glycosylation is found at N331 and N445. S569 functions as the Charge relay system in the catalytic mechanism. Ca(2+)-binding residues include D610 and I611. N613 is a glycosylation site (N-linked (GlcNAc...) asparagine). Ca(2+)-binding residues include G629 and D631.

The cofactor is Ca(2+). N-glycosylated. Post-translationally, O-glycosylated.

It localises to the secreted. Its subcellular location is the extracellular space. Its activity is regulated as follows. Inhibited by antipain and leupeptin. In terms of biological role, serine endopeptidase which hydrolyzes a range of fluorogenic peptide substrates containing the basic residues arginine or lysine at the P1 position and prefers paired basic resides. Also hydrolyzes clupeine and salmine, activates plasminogen and converts trypsinogen to trypsin. This is Aorsin from Aspergillus oryzae (strain ATCC 42149 / RIB 40) (Yellow koji mold).